Here is a 52-residue protein sequence, read N- to C-terminus: MFDINLTHEQQQKAVEQIQELMAQGISSGEAIQIVAKALREIHKNDKKTPEN.

The protein belongs to the UPF0181 family.

The polypeptide is UPF0181 protein HI_1434.2 (Haemophilus influenzae (strain ATCC 51907 / DSM 11121 / KW20 / Rd)).